The chain runs to 378 residues: MPSLQDYHVPYPAAAPGQVRKVIYLPQQNPTVEQQHLRVQIIPGRHENCEDGRLYKLTGSVTEETLQGWGYSYYVVKLGDIYAAHRSSSDPARVTTFVALDENPVIAYNSKLPIVVYVPEGAELRYRVWTDDTSLVQSIQQQPEAPALPQPHLVPVTERQECPHELPRCGAPGEYVTQDCKTSMLSVEEVHRLSSSTPPLIPSAVRGSAHEAHAAPPLHSAELEERVCPVMEHLEVCPQNNGHEGREQPAEEASTLKRRSSSSSSSNPRHHSANEPSPSRPRLSSTEYWPHENSKTKRSPSATHKPRRSTDSAAIEEAGVGAPKKNRSSSSSASSKRKAEDNVYEKTMKNFWNRARSDSPRKASASSKKSGNGSKADP.

2 disordered regions span residues 191 to 216 and 238 to 378; these read HRLS…HAAP and PQNN…KADP. Polar residues predominate over residues 274 to 287; that stretch reads NEPSPSRPRLSSTE. A compositionally biased stretch (basic and acidic residues) spans 337 to 348; sequence RKAEDNVYEKTM. A compositionally biased stretch (low complexity) spans 362–378; the sequence is KASASSKKSGNGSKADP.

This sequence belongs to the protease inhibitor I11 (ecotin) family.

The polypeptide is Ecotin-like protein 3 (Leishmania infantum).